The primary structure comprises 570 residues: Putative ABC transporter ATP-binding protein SAV2684 (570 aa).

ABC transporter domains follow at residues 6-247 and 304-537; these read ISFK…GIRE and LELN…ASLR. Residues 40–47 and 338–345 each bind ATP; these read GASGSGKS and GHNGAGKS.

The protein belongs to the ABC transporter superfamily.

The protein resides in the cell membrane. In terms of biological role, probably part of an ABC transporter complex. Responsible for energy coupling to the transport system. This Staphylococcus aureus (strain Mu50 / ATCC 700699) protein is Putative ABC transporter ATP-binding protein SAV2684.